The following is a 122-amino-acid chain: Small ribosomal subunit protein uS13 (122 aa).

Positions 99-122 (RGQRTHTNARTRKGPAKAIAGKKK) are disordered.

This sequence belongs to the universal ribosomal protein uS13 family. In terms of assembly, part of the 30S ribosomal subunit. Forms a loose heterodimer with protein S19. Forms two bridges to the 50S subunit in the 70S ribosome.

Its function is as follows. Located at the top of the head of the 30S subunit, it contacts several helices of the 16S rRNA. In the 70S ribosome it contacts the 23S rRNA (bridge B1a) and protein L5 of the 50S subunit (bridge B1b), connecting the 2 subunits; these bridges are implicated in subunit movement. Contacts the tRNAs in the A and P-sites. This chain is Small ribosomal subunit protein uS13, found in Agrobacterium fabrum (strain C58 / ATCC 33970) (Agrobacterium tumefaciens (strain C58)).